The chain runs to 103 residues: MYAVFQSGGKQHRVAEGQTVRLEKIEVAPGESVEFGDILMVSNGEDVKIGTPFVSGGKVTAEVVTHGRGEKVKIVKFRRRKHSRTQMGHRQWFTEVKITGISA.

Belongs to the bacterial ribosomal protein bL21 family. Part of the 50S ribosomal subunit. Contacts protein L20.

Functionally, this protein binds to 23S rRNA in the presence of protein L20. The protein is Large ribosomal subunit protein bL21 of Pseudoalteromonas atlantica (strain T6c / ATCC BAA-1087).